The sequence spans 961 residues: ATPase 7, plasma membrane-type (961 aa).

At 1–64 (MTDIEALKAI…EKKESKILKF (64 aa)) the chain is on the cytoplasmic side. Residues 65–84 (LGFMWNPLSWVMEAAALMAI) form a helical membrane-spanning segment. At 85-96 (GLAHGGGKPADY) the chain is on the extracellular side. Residues 97–117 (HDFVGIVVLLLINSTISFVEE) form a helical membrane-spanning segment. The Cytoplasmic portion of the chain corresponds to 118-246 (NNAGNAAAAL…GHFQKVLTAI (129 aa)). The chain crosses the membrane as a helical span at residues 247–267 (GNFCICSIAVGMAIEIVVIYG). Over 268–276 (LQKRGYRVG) the chain is Extracellular. Residues 277-294 (IDNLLVLLIGGIPIAMPT) traverse the membrane as a helical segment. Over 295–643 (VLSVTMAIGA…TSRAIFQRMK (349 aa)) the chain is Cytoplasmic. D332 acts as the 4-aspartylphosphate intermediate in catalysis. Mg(2+) contacts are provided by D588 and D592. Residues 644 to 665 (NYTIYAVSITIRIVMGFMLLCV) form a helical membrane-spanning segment. Residues 666 to 670 (FWEFD) are Extracellular-facing. A helical membrane pass occupies residues 671 to 693 (FPPFMVLVIAILNDGTIMTISKD). The Cytoplasmic segment spans residues 694–709 (RVKPSPTPDCWKLKEI). Residues 710 to 730 (FATGVVLGAYLAIMTVVFFWA) traverse the membrane as a helical segment. Residues 731–764 (AYETNFFHNIFHVRNFNQHHFKMKDKKVAAHLNE) lie on the Extracellular side of the membrane. A helical membrane pass occupies residues 765–785 (QMASAVYLQVSTISQALIFVT). Residues 786–797 (RSRSWSFVERPG) lie on the Cytoplasmic side of the membrane. The chain crosses the membrane as a helical span at residues 798-818 (FLLVIAFLIAQLVASVISAMA). Residues 819-826 (NWPFAGIR) lie on the Extracellular side of the membrane. Residues 827 to 847 (SIGWGWTGVIWIFNIVTYMLL) form a helical membrane-spanning segment. The Cytoplasmic segment spans residues 848-961 (DPIKFLVRYA…EDPNSNNYTI (114 aa)). T894 carries the phosphothreonine modification. 2 positions are modified to phosphoserine: S910 and S942. The segment at 959–961 (YTI) is interaction with 14-3-3 proteins. Residue T960 is modified to Phosphothreonine.

The protein belongs to the cation transport ATPase (P-type) (TC 3.A.3) family. Type IIIA subfamily. As to quaternary structure, binds to 14-3-3 proteins. The binding is induced by phosphorylation of Thr-960. Binding to 14-3-3 proteins activates the H(+)-ATPase. As to expression, expressed in guard cells, roots and leaves, and barely in mesophyll cells.

The protein localises to the membrane. The enzyme catalyses ATP + H2O + H(+)(in) = ADP + phosphate + 2 H(+)(out). The plasma membrane H(+) ATPase of plants and fungi generates a proton gradient that drives the active transport of nutrients by H(+)-symport. The resulting external acidification and/or internal alkinization may mediate growth responses. This is ATPase 7, plasma membrane-type (AHA7) from Arabidopsis thaliana (Mouse-ear cress).